Here is a 714-residue protein sequence, read N- to C-terminus: MEKPRRLRPRARPQCRGLMKVNLGDFQASILGTHTNARLSGAYPGRPPTFPALETRLTFNKVDLEKNPMEPRQQQFSLWYVLVTILAMLAIQTLFVSGHVETIPYSDFKVLLKAGKLKDVAIGEQAISGTFSTEGIDNLLAKQQIEEIRREAKGDHAFSTLRVADPELVQELEAAKVRFVGQPDNKWLSTILSWVVPAVIFFGIWSFLIKRVGGAAGSMMEIGKSKAKVYMQKETGVTFADVAGIDEAKEELSEIVSFLKDPQRYQRLGGKIPKGVLLVGAPGTGKTLLAKAVAGEAGVPFFSMSGSDFVEMFVGVGAARVRDLFKQAETKAPCIIFIDELDALGKTRALNAVGGNEEREQTLNQLLVEMDGFDSNKGVIIMAATNRPEILDPALLRPGRFDRHVALDRPDLKGREQILKVHVKGVVLAPEVDLTKLAGRTPGFAGADLANLVNEAALLAARKSKQMVEMADFDEALDRIVGGLEKKNRVMNPKEKETIAFHEAGHAIVAEHRPLADRVSKVSIIPRGVAALGYTQQTPTEDRYLLKRSELLDRLDVLLGGRIAEQLIFGDVSTGAQNDLQRATDMARQMITQFGMSDQLGLATYENMPNPLFAGTGLMQRERNEYSESTAQMIDAEVRKLLAEASHRVQATLEGQRTKLDALAQLLLEKEVVDRQDLDMFLSAKVTPMPPPKPVANIEESTATGKPDQKTQGT.

Residues 1-75 (MEKPRRLRPR…KNPMEPRQQQ (75 aa)) are Cytoplasmic-facing. Residues 76-96 (FSLWYVLVTILAMLAIQTLFV) traverse the membrane as a helical segment. Over 97 to 188 (SGHVETIPYS…FVGQPDNKWL (92 aa)) the chain is Periplasmic. Residues 189-209 (STILSWVVPAVIFFGIWSFLI) form a helical membrane-spanning segment. The Cytoplasmic segment spans residues 210–714 (KRVGGAAGSM…GKPDQKTQGT (505 aa)). 280 to 287 (GAPGTGKT) provides a ligand contact to ATP. Residue histidine 502 coordinates Zn(2+). Residue glutamate 503 is part of the active site. 2 residues coordinate Zn(2+): histidine 506 and aspartate 579. The tract at residues 688-714 (PMPPPKPVANIEESTATGKPDQKTQGT) is disordered. Residues 699–714 (EESTATGKPDQKTQGT) show a composition bias toward polar residues.

It in the central section; belongs to the AAA ATPase family. In the C-terminal section; belongs to the peptidase M41 family. As to quaternary structure, homohexamer. Zn(2+) serves as cofactor.

The protein localises to the cell inner membrane. Acts as a processive, ATP-dependent zinc metallopeptidase for both cytoplasmic and membrane proteins. Plays a role in the quality control of integral membrane proteins. The polypeptide is ATP-dependent zinc metalloprotease FtsH (Ralstonia pickettii (strain 12J)).